The following is a 244-amino-acid chain: 14-3-3 protein homolog 1 (244 aa).

The protein belongs to the 14-3-3 family.

The polypeptide is 14-3-3 protein homolog 1 (Echinococcus multilocularis (Fox tapeworm)).